The following is a 151-amino-acid chain: Putative pre-16S rRNA nuclease (151 aa).

This sequence belongs to the YqgF nuclease family.

Its subcellular location is the cytoplasm. Functionally, could be a nuclease involved in processing of the 5'-end of pre-16S rRNA. The polypeptide is Putative pre-16S rRNA nuclease (Pelagibacter ubique (strain HTCC1062)).